Here is a 252-residue protein sequence, read N- to C-terminus: Homeobox protein EMX2 (252 aa).

The segment at residues 154-213 is a DNA-binding region (homeobox); sequence PKRIRTAFSPSQLLRLEHAFEKNHYVVGAERKQLAHSLSLTETQVKVWFQNRRTKFKRQK. The interval 212-252 is disordered; the sequence is QKLEEEGSDSQQKKKGTHHINRWRIATKQASPEEIDVTSDD. The span at 224–233 shows a compositional bias: basic residues; that stretch reads KKKGTHHINR.

Belongs to the EMX homeobox family. In terms of assembly, interacts with translation initiation factor EIF4E. In terms of tissue distribution, cerebral cortex.

It localises to the nucleus. Its subcellular location is the cell projection. The protein localises to the axon. Transcription factor, which in cooperation with EMX1, acts to generate the boundary between the roof and archipallium in the developing brain. May function in combination with OTX1/2 to specify cell fates in the developing central nervous system. In the inner ear, it controls the distribution of GPR156 at hair cell boundaries, and regulates the organization of stereociliary bundles in opposite orientations across the line of polarity reversal (LPR). The chain is Homeobox protein EMX2 (EMX2) from Homo sapiens (Human).